Here is a 349-residue protein sequence, read N- to C-terminus: C-X-C chemokine receptor type 1 (349 aa).

At 1-44 (MAEAEYFIWIAPEGDFEEEFGNITRMLPTGEYFSPCKRVPMTNR) the chain is on the extracellular side. N-linked (GlcNAc...) asparagine glycosylation occurs at Asn22. The helical transmembrane segment at 45–71 (QAVVVFYALVFLLSLLGNSLVMLVILY) threads the bilayer. At 72-80 (RRRTRSVTD) the chain is on the cytoplasmic side. A helical membrane pass occupies residues 81–101 (VYVLNLAIADLLFSLTLPFLA). Over 102-116 (VSKWKGWIFGTPLCK) the chain is Extracellular. Cys115 and Cys192 are joined by a disulfide. Residues 117–138 (MVSLLKEVNFFSGILLLACISV) form a helical membrane-spanning segment. Topologically, residues 139–159 (DRYLAIVHATRTLTRKRYLVK) are cytoplasmic. A helical membrane pass occupies residues 160–179 (FVCMGTWGLSLVLSLPFAIF). Residues 180-204 (RQAYKPYRSGTVCYEVLGEATADLR) are Extracellular-facing. Residues 205 to 225 (ITLRGLSHIFGFLLPLFIMLV) form a helical membrane-spanning segment. Residues 226–247 (CYGLTLRTLFKAHMRQKRRAMW) are Cytoplasmic-facing. The helical transmembrane segment at 248 to 269 (VIFAVVLVFLLCCLPYNLVLLS) threads the bilayer. The Extracellular segment spans residues 270–290 (DTLLGAHLIQDTCERRNNIDQ). A helical membrane pass occupies residues 291-313 (ALYITEILGFSHSCLNPVIYAFV). Residues 314–349 (GQSFRHEFLKILANLVHKEVLTHHSASFRTSLTTIY) are Cytoplasmic-facing.

It belongs to the G-protein coupled receptor 1 family. Interacts with IL8. Interacts with GNAI2.

It is found in the cell membrane. Functionally, receptor to interleukin-8, which is a powerful neutrophils chemotactic factor. Binding of IL-8 to the receptor causes activation of neutrophils. This response is mediated via a G-protein that activates a phosphatidylinositol-calcium second messenger system. The sequence is that of C-X-C chemokine receptor type 1 (Cxcr1) from Rattus norvegicus (Rat).